The following is a 145-amino-acid chain: Flagellar assembly factor FliW (145 aa).

This sequence belongs to the FliW family. As to quaternary structure, interacts with translational regulator CsrA and flagellin(s).

The protein resides in the cytoplasm. Functionally, acts as an anti-CsrA protein, binds CsrA and prevents it from repressing translation of its target genes, one of which is flagellin. Binds to flagellin and participates in the assembly of the flagellum. This Clostridium kluyveri (strain NBRC 12016) protein is Flagellar assembly factor FliW.